The following is an 835-amino-acid chain: MKKLPYIAIRNQLIAPYSTATVKIGRPNSLAAIQFAQTGFNGEIYIFYTKDNKMVDSIKKTSDLEEYGVKAKIKEIVEQGKLQNVVFEVEELVKVKEIYKELGKYSFTSDIFASVTEVEYSGNFDILSDYRSKAKMLIEKLSNLHDEIGSYIYGGRRGIKELEKAFSANTNISPLTHDSFNVDIWKIIDALTIEHSWKEYFAIINETNLEKNYELAINMLINAIKMGKLDEEVNSTMRGDLENQQRDFLLRERLRQIKKLLKDDEAGAKAIENMEDAEENARQYPDYVIEALKTEQNRLASMMPASPEANISKTYIDLITTLPWKKVSGELLDIDNVRKILDKHHYGLEKPKERILEFISVLTYTKKENEKNEYVPVKGEENRFIDKNLFVNKTGNFLKDRVNNIPILTLIGPPGTGKTTLAKSIAEALGRQFVKISLGGVKDESEIRGHRRTYVGALPGKIISGIKKAGVSNPVILLDEIDKMSSDFRGDPLSALLEVLDPEQNTNFQDHYLDLEYDLSKVLFIATANSFDSIPAPLYDRVEFLELSTYTLIEKTRIARTHLLSKILSLNALTEKQYQITDEVLAYIIKNYTRESGVRNLQRLLDSIARKIVVRILDKKVDKEFVIDKAIVREFLGPELYNEKGDETQPKAGVVNALAYTAYGGTSMTIEVTTFPTTAKGALNLTGQLKDVMRESATISLAYVRSNAEKFGIKDFDFENTSIHIHVPEGAIQKDGPSAGVTFTTAIISALSKKAVPNTIAMTGEITLRGKVLPIGGLKEKSLAASQIGIKTIFIPKDNEKNLIDVPEEVKKDIKFVPVEYYDEIFKYIFEAKNK.

The Lon N-terminal domain occupies 4–224 (LPYIAIRNQL…LAINMLINAI (221 aa)). 412–419 (GPPGTGKT) is an ATP binding site. A Lon proteolytic domain is found at 649–832 (QPKAGVVNAL…DEIFKYIFEA (184 aa)). Catalysis depends on residues serine 738 and lysine 781.

The protein belongs to the peptidase S16 family. In terms of assembly, homohexamer. Organized in a ring with a central cavity.

Its subcellular location is the cytoplasm. It carries out the reaction Hydrolysis of proteins in presence of ATP.. Its function is as follows. ATP-dependent serine protease that mediates the selective degradation of mutant and abnormal proteins as well as certain short-lived regulatory proteins. Required for cellular homeostasis and for survival from DNA damage and developmental changes induced by stress. Degrades polypeptides processively to yield small peptide fragments that are 5 to 10 amino acids long. Binds to DNA in a double-stranded, site-specific manner. The protein is Lon protease of Metamycoplasma arthritidis (strain 158L3-1) (Mycoplasma arthritidis).